A 462-amino-acid polypeptide reads, in one-letter code: MSNKMWGGRFTSAPDAIMEEINASIGFDQRLYAQDIAGSKAHAKMLAAQGIVAAQDADRIAEGLDTILSEIEAGNFTFKRELEDIHMNVESRLAELIGASAGRLHTARSRNDQVATDFRLYVRDTLDALDAQLADLQRALAEKALAHAATVMPGFTHLQTAQPVTFGHHLMAYVEMVARDRGRLADARKRLNECPLGSAALAGTSFPIDRDATAKALGFDRPTANSLDAVSDRDFVMETLSAASICAVHLSRFAEEVVIWTSPSFALVKLSDKFTTGSSIMPQKRNPDAAELVRAKAGRIIGALTGILVVMKGLPLAYAKDMQEDKEGAFDAFSALSLVVAASAGMVRDIVPDEKRMEKAAGQGYSTATDLADWLVRALNIPFREAHHITGRIVGLASDRGIALHKLSLDDMQGVDARITQDVFSVLSVVRSVRSRVSYGGTAPTRVRTQAKRWLKKLGVPA.

Belongs to the lyase 1 family. Argininosuccinate lyase subfamily.

It is found in the cytoplasm. It catalyses the reaction 2-(N(omega)-L-arginino)succinate = fumarate + L-arginine. Its pathway is amino-acid biosynthesis; L-arginine biosynthesis; L-arginine from L-ornithine and carbamoyl phosphate: step 3/3. This chain is Argininosuccinate lyase, found in Xanthobacter autotrophicus (strain ATCC BAA-1158 / Py2).